Consider the following 223-residue polypeptide: Pre-mRNA-splicing factor SPF27 (223 aa).

Positions 139–223 form a coiled coil; the sequence is NENLLHMIDC…GENKENIEDY (85 aa).

The protein belongs to the SPF27 family. In terms of assembly, component of the pre-catalytic and catalytic spliceosome complexes. Component of the postcatalytic spliceosome P complex.

The protein localises to the nucleus. Required for pre-mRNA splicing as component of the activated spliceosome. May have a scaffolding role in the spliceosome assembly as it contacts all other components of the core complex. The chain is Pre-mRNA-splicing factor SPF27 (bcas2) from Xenopus tropicalis (Western clawed frog).